The following is a 509-amino-acid chain: Subtelomeric hrmA-associated cluster protein AFUA_5G14880 (509 aa).

Part of the subtelomeric hrmA-associated cluster (HAC) containing genes that alter the hyphal surface (such as reduced total chitin or increased beta-glucan exposure) and perturb inter-hyphal interactions within the developing biofilms, resulting in a loss of vertically aligned polarized growing filaments. Consequently, this hypoxia-typic morphotype (called H-MORPH) with altered biofilm architecture leads to increased hypoxia fitness, increased host inflammation, rapid disease progression, and mortality in a murine model of invasive aspergillosis. The chain is Subtelomeric hrmA-associated cluster protein AFUA_5G14880 from Aspergillus fumigatus (strain ATCC MYA-4609 / CBS 101355 / FGSC A1100 / Af293) (Neosartorya fumigata).